The primary structure comprises 278 residues: Extracellular metalloprotease GLRG_06511 (278 aa).

The first 19 residues, 1-19, serve as a signal peptide directing secretion; sequence MQFKSLLVSALAAASTALA. Asn51 carries an N-linked (GlcNAc...) asparagine glycan. His190 is a binding site for Zn(2+). Glu191 is a catalytic residue. A Zn(2+)-binding site is contributed by His194. A disulfide bond links Cys227 and Cys254.

The protein belongs to the peptidase M43B family.

It localises to the secreted. In terms of biological role, secreted metalloproteinase that allows assimilation of proteinaceous substrates. This is Extracellular metalloprotease GLRG_06511 from Colletotrichum graminicola (strain M1.001 / M2 / FGSC 10212) (Maize anthracnose fungus).